A 940-amino-acid chain; its full sequence is SWI/SNF-related matrix-associated actin-dependent regulator of chromatin subfamily A-like protein 1 (940 aa).

Residues 1–155 (MSISPLKCPC…GQGHPQASLE (155 aa)) are disordered. Ser-2 is subject to N-acetylserine. 2 mediates interaction with RPA2 regions span residues 2 to 36 (SISP…KLLA) and 11 to 36 (LLQR…KLLA). Over residues 17 to 40 (GKIEANRQKALARRAEKLLAEQHQ) the composition is skewed to basic and acidic residues. Positions 18–40 (KIEANRQKALARRAEKLLAEQHQ) form a coiled coil. 2 stretches are compositionally biased toward polar residues: residues 41-53 (KPAQ…SQNL) and 68-95 (KQQN…TSEQ). Ser-125, Ser-131, Ser-153, and Ser-200 each carry phosphoserine. 2 HARP domains span residues 229-299 (VVGS…QPLE) and 325-396 (SLAF…DPLP). In terms of domain architecture, Helicase ATP-binding spans 442 to 597 (NFAIAQRGRL…YTQILAVRPT (156 aa)). ATP is bound at residue 455 to 462 (DDMGLGKT). The short motif at 546-549 (DESH) is the DESH box element. Positions 641–658 (RRLKGDVLSQLPAKQARW) match the Nuclear localization signal motif. The tract at residues 662–682 (PQARSTPGPEPPWMPPPRMTT) is disordered. The span at 669 to 679 (GPEPPWMPPPR) shows a compositional bias: pro residues. In terms of domain architecture, Helicase C-terminal spans 708–864 (SIIEYILDLL…ETNFSEMTEA (157 aa)). The tract at residues 899–918 (ESFDPGSQDTGDKLDESTLT) is disordered.

The protein belongs to the SNF2/RAD54 helicase family. SMARCAL1 subfamily. In terms of assembly, interacts with RPA2; the interaction is direct and mediates the recruitment by the RPA complex of SMARCAL1 to sites of DNA damage. In terms of processing, DNA damage-regulated phosphorylation by kinases that may include ATM, ATR and PRKDC. Expressed in mature oocytes, 2-4 cell stage embryos and 8-16 cell stage embryos. Expressed at lower levels in morulae and blastocysts.

Its subcellular location is the nucleus. It carries out the reaction ATP + H2O = ADP + phosphate + H(+). In terms of biological role, ATP-dependent annealing helicase that binds selectively to fork DNA relative to ssDNA or dsDNA and catalyzes the rewinding of the stably unwound DNA. Rewinds single-stranded DNA bubbles that are stably bound by replication protein A (RPA). Acts throughout the genome to reanneal stably unwound DNA, performing the opposite reaction of many enzymes, such as helicases and polymerases, that unwind DNA. May play an important role in DNA damage response by acting at stalled replication forks. The chain is SWI/SNF-related matrix-associated actin-dependent regulator of chromatin subfamily A-like protein 1 (SMARCAL1) from Bos taurus (Bovine).